Here is a 226-residue protein sequence, read N- to C-terminus: Ribonuclease 3 (226 aa).

The region spanning 6–128 (FNKLQKKMGY…IIGGIFLDSN (123 aa)) is the RNase III domain. Residue Glu-41 coordinates Mg(2+). The active site involves Asp-45. Mg(2+) is bound by residues Asn-114 and Glu-117. Residue Glu-117 is part of the active site. A DRBM domain is found at 155–225 (DPKTRLQEYL…AKQALLLFNI (71 aa)).

This sequence belongs to the ribonuclease III family. Homodimer. It depends on Mg(2+) as a cofactor.

The protein resides in the cytoplasm. The catalysed reaction is Endonucleolytic cleavage to 5'-phosphomonoester.. Its function is as follows. Digests double-stranded RNA. Involved in the processing of primary rRNA transcript to yield the immediate precursors to the large and small rRNAs (23S and 16S). Processes some mRNAs, and tRNAs when they are encoded in the rRNA operon. Processes pre-crRNA and tracrRNA of type II CRISPR loci if present in the organism. The protein is Ribonuclease 3 of Wigglesworthia glossinidia brevipalpis.